Here is a 458-residue protein sequence, read N- to C-terminus: MSITKEFDTITAISTPLGEGAIGIVRLSGTDALAIAQSVFKGKNLEQVASHTINYGHIIDPKTGTIIDEVMVSVMLAPKTFTRENVVEINTHGGIAVTNEILQLLIRQGARMAEPGEFTKRAFLNGRVDLTQAEAVMDIIRAKTDKAMTIAVKQLDGSLSQLINDTRQEILNTLAQVEVNIDYPEYDDVEEMTTALLREKTQEFQSLLENLLRTAKRGKILREGLSTAIIGRPNVGKSSLLNNLLREDKAIVTDIAGTTRDVIEEYVNIKGVPLKLVDTAGIRETDDLVEQIGVERSKKALQEADLVLLVLNASEKLTDQDRALLNLSQDSNRIILLNKTDLEQKIELEQLPDDYIPISVLTNQNINLIEDRINQLFFDNAGLVEQDATYLSNARHISLIEKAVQSLEAVNDGLALGMPVDLLQVDLTRTWEILGEITGDAAPDELITQLFSQFCLGK.

Arg-26, Glu-88, and Arg-127 together coordinate (6S)-5-formyl-5,6,7,8-tetrahydrofolate. The TrmE-type G domain occupies 224-378; that stretch reads GLSTAIIGRP…IEDRINQLFF (155 aa). Asn-234 provides a ligand contact to K(+). Residues 234–239, 253–259, and 278–281 contribute to the GTP site; these read NVGKSS, TDIAGTT, and DTAG. Ser-238 provides a ligand contact to Mg(2+). Positions 253, 255, and 258 each coordinate K(+). A Mg(2+)-binding site is contributed by Thr-259. Lys-458 is a (6S)-5-formyl-5,6,7,8-tetrahydrofolate binding site.

This sequence belongs to the TRAFAC class TrmE-Era-EngA-EngB-Septin-like GTPase superfamily. TrmE GTPase family. Homodimer. Heterotetramer of two MnmE and two MnmG subunits. The cofactor is K(+).

The protein resides in the cytoplasm. Exhibits a very high intrinsic GTPase hydrolysis rate. Involved in the addition of a carboxymethylaminomethyl (cmnm) group at the wobble position (U34) of certain tRNAs, forming tRNA-cmnm(5)s(2)U34. This chain is tRNA modification GTPase MnmE, found in Streptococcus pyogenes serotype M18 (strain MGAS8232).